Consider the following 290-residue polypeptide: Diaminopimelate epimerase (290 aa).

Residues Asn-14 and Asn-67 each contribute to the substrate site. Cys-76 acts as the Proton donor in catalysis. Residues 77 to 78 (GN), Asn-166, Asn-199, and 217 to 218 (ER) contribute to the substrate site. Cys-226 (proton acceptor) is an active-site residue. 227-228 (GT) lines the substrate pocket.

Belongs to the diaminopimelate epimerase family. In terms of assembly, homodimer.

It localises to the cytoplasm. It carries out the reaction (2S,6S)-2,6-diaminopimelate = meso-2,6-diaminopimelate. Its pathway is amino-acid biosynthesis; L-lysine biosynthesis via DAP pathway; DL-2,6-diaminopimelate from LL-2,6-diaminopimelate: step 1/1. Catalyzes the stereoinversion of LL-2,6-diaminopimelate (L,L-DAP) to meso-diaminopimelate (meso-DAP), a precursor of L-lysine and an essential component of the bacterial peptidoglycan. The sequence is that of Diaminopimelate epimerase from Geobacillus thermodenitrificans (strain NG80-2).